Reading from the N-terminus, the 272-residue chain is NAD kinase (272 aa).

Aspartate 50 (proton acceptor) is an active-site residue. NAD(+)-binding positions include aspartate 50–glycine 51, asparagine 126–glutamate 127, arginine 152, aspartate 154, threonine 165–serine 170, and alanine 189.

The protein belongs to the NAD kinase family. A divalent metal cation serves as cofactor.

Its subcellular location is the cytoplasm. It catalyses the reaction NAD(+) + ATP = ADP + NADP(+) + H(+). Its function is as follows. Involved in the regulation of the intracellular balance of NAD and NADP, and is a key enzyme in the biosynthesis of NADP. Catalyzes specifically the phosphorylation on 2'-hydroxyl of the adenosine moiety of NAD to yield NADP. The chain is NAD kinase from Streptococcus pneumoniae (strain 70585).